Reading from the N-terminus, the 666-residue chain is Vicilin-like antimicrobial peptides 2-2 (666 aa).

A signal peptide spans 1–27; that stretch reads MAINTSNLCSLLFLLSLFLLSTTVSLA. Disordered regions lie at residues 161-191 and 221-251; these read QQKR…DPQQ and RQHG…SDNP. A compositionally biased stretch (basic and acidic residues) spans 239–251; it reads RYEEGEEKQSDNP. Cupin type-1 domains lie at 271–410 and 455–625; these read SVLE…ERLR and YNLF…KEVE.

The protein belongs to the 7S seed storage protein family.

It is found in the secreted. Functionally, antimicrobial peptides 2b, 2c and 2d have antibacterial and antifungal activity against a range of species. The chain is Vicilin-like antimicrobial peptides 2-2 from Macadamia integrifolia (Macadamia nut).